Here is a 211-residue protein sequence, read N- to C-terminus: Large ribosomal subunit protein uL4 (211 aa).

The segment at 48–89 (KRAGTASTKTRVEVRGGGAKPWRQKGTGRARAGSRTSPLWRG) is disordered.

Belongs to the universal ribosomal protein uL4 family. Part of the 50S ribosomal subunit.

Functionally, one of the primary rRNA binding proteins, this protein initially binds near the 5'-end of the 23S rRNA. It is important during the early stages of 50S assembly. It makes multiple contacts with different domains of the 23S rRNA in the assembled 50S subunit and ribosome. Forms part of the polypeptide exit tunnel. The chain is Large ribosomal subunit protein uL4 from Desulfotalea psychrophila (strain LSv54 / DSM 12343).